The sequence spans 235 residues: 7-cyano-7-deazaguanine synthase (235 aa).

12-22 (FSGGQDSTTCL) provides a ligand contact to ATP. Positions 200, 215, 218, and 221 each coordinate Zn(2+).

This sequence belongs to the QueC family. Requires Zn(2+) as cofactor.

It carries out the reaction 7-carboxy-7-deazaguanine + NH4(+) + ATP = 7-cyano-7-deazaguanine + ADP + phosphate + H2O + H(+). Its pathway is purine metabolism; 7-cyano-7-deazaguanine biosynthesis. Its function is as follows. Catalyzes the ATP-dependent conversion of 7-carboxy-7-deazaguanine (CDG) to 7-cyano-7-deazaguanine (preQ(0)). The chain is 7-cyano-7-deazaguanine synthase from Leptothrix cholodnii (strain ATCC 51168 / LMG 8142 / SP-6) (Leptothrix discophora (strain SP-6)).